Here is a 483-residue protein sequence, read N- to C-terminus: Linamarin synthase 1 (483 aa).

Residue His22 is the Proton acceptor of the active site. An an anthocyanidin-binding site is contributed by His22. The active-site Charge relay is the Asp124. The UDP-alpha-D-glucose site is built by Thr146, Val360, Gln362, His377, Trp380, Asn381, Ser382, and Glu385. An an anthocyanidin-binding site is contributed by Ala400. UDP-alpha-D-glucose-binding residues include Glu401 and Gln402.

Belongs to the UDP-glycosyltransferase family. Expressed in the cortex, xylem and phloem parenchyma, and in specific cells in the endodermis of the petiole of the first unfolded leaf.

The enzyme catalyses 2-hydroxy-2-methylpropanenitrile + UDP-alpha-D-glucose = linamarin + UDP + H(+). In terms of biological role, UDP-glucosyltransferase catalyzing in planta synthesis of cyanogenic glucosides. Able to glucosylate acetone cyanohydrin and 2-hydroxy-2-methylbutyronitrile, forming linamarin and lotaustralin. Also accepts, to some extent, a wide range of potential acceptor substrates, including simple alcohols, flavonoids, isoflavonoids and other hydroxynitriles such as p-hydroxymandelonitrile, mandelonitrile, (E)-4-hydroxy-2-methylbut-2-enenitrile and (E)- 2-(hydroxymethyl)but-2-enenitrile. The chain is Linamarin synthase 1 from Manihot esculenta (Cassava).